A 339-amino-acid polypeptide reads, in one-letter code: DNA-directed RNA polymerase subunit alpha (339 aa).

The tract at residues methionine 1–aspartate 237 is alpha N-terminal domain (alpha-NTD). An alpha C-terminal domain (alpha-CTD) region spans residues phenylalanine 256–glutamate 339.

Belongs to the RNA polymerase alpha chain family. As to quaternary structure, homodimer. The RNAP catalytic core consists of 2 alpha, 1 beta, 1 beta' and 1 omega subunit. When a sigma factor is associated with the core the holoenzyme is formed, which can initiate transcription.

It catalyses the reaction RNA(n) + a ribonucleoside 5'-triphosphate = RNA(n+1) + diphosphate. Its function is as follows. DNA-dependent RNA polymerase catalyzes the transcription of DNA into RNA using the four ribonucleoside triphosphates as substrates. The protein is DNA-directed RNA polymerase subunit alpha of Desulfosudis oleivorans (strain DSM 6200 / JCM 39069 / Hxd3) (Desulfococcus oleovorans).